The primary structure comprises 327 residues: Biotin synthase (327 aa).

The region spanning 51–278 (QTIQLSTLMS…KSYVRLSAGR (228 aa)) is the Radical SAM core domain. Cys66, Cys70, and Cys73 together coordinate [4Fe-4S] cluster. [2Fe-2S] cluster contacts are provided by Cys110, Cys141, Cys201, and Arg273.

The protein belongs to the radical SAM superfamily. Biotin synthase family. As to quaternary structure, homodimer. Requires [4Fe-4S] cluster as cofactor. It depends on [2Fe-2S] cluster as a cofactor.

It catalyses the reaction (4R,5S)-dethiobiotin + (sulfur carrier)-SH + 2 reduced [2Fe-2S]-[ferredoxin] + 2 S-adenosyl-L-methionine = (sulfur carrier)-H + biotin + 2 5'-deoxyadenosine + 2 L-methionine + 2 oxidized [2Fe-2S]-[ferredoxin]. The protein operates within cofactor biosynthesis; biotin biosynthesis; biotin from 7,8-diaminononanoate: step 2/2. Functionally, catalyzes the conversion of dethiobiotin (DTB) to biotin by the insertion of a sulfur atom into dethiobiotin via a radical-based mechanism. This Histophilus somni (strain 2336) (Haemophilus somnus) protein is Biotin synthase.